The sequence spans 62 residues: DNA-directed RNA polymerase subunit Rpo10 (62 aa).

Residues cysteine 6, cysteine 9, cysteine 43, and cysteine 44 each coordinate Zn(2+).

Belongs to the archaeal Rpo10/eukaryotic RPB10 RNA polymerase subunit family. Part of the RNA polymerase complex. Zn(2+) serves as cofactor.

The protein resides in the cytoplasm. It carries out the reaction RNA(n) + a ribonucleoside 5'-triphosphate = RNA(n+1) + diphosphate. Its function is as follows. DNA-dependent RNA polymerase (RNAP) catalyzes the transcription of DNA into RNA using the four ribonucleoside triphosphates as substrates. This chain is DNA-directed RNA polymerase subunit Rpo10, found in Methanospirillum hungatei JF-1 (strain ATCC 27890 / DSM 864 / NBRC 100397 / JF-1).